The sequence spans 205 residues: Large ribosomal subunit protein uL4 (205 aa).

The tract at residues 43–95 (RSGNRAQKDRAEVKHSTKKPWRQKGTGRARAGMTSSPLWRGGGRAFPNSPEEN) is disordered. Positions 48–57 (AQKDRAEVKH) are enriched in basic and acidic residues. Basic residues predominate over residues 58 to 69 (STKKPWRQKGTG).

The protein belongs to the universal ribosomal protein uL4 family. As to quaternary structure, part of the 50S ribosomal subunit.

Functionally, one of the primary rRNA binding proteins, this protein initially binds near the 5'-end of the 23S rRNA. It is important during the early stages of 50S assembly. It makes multiple contacts with different domains of the 23S rRNA in the assembled 50S subunit and ribosome. Forms part of the polypeptide exit tunnel. The polypeptide is Large ribosomal subunit protein uL4 (Bordetella pertussis (strain Tohama I / ATCC BAA-589 / NCTC 13251)).